A 472-amino-acid chain; its full sequence is Succinate-semialdehyde dehydrogenase [NADP(+)] (472 aa).

NADP(+) contacts are provided by residues 134 to 135 (WN), 158 to 161 (KHAS), and 210 to 211 (GS). Catalysis depends on E232, which acts as the Proton acceptor. L233 contributes to the NADP(+) binding site. Catalysis depends on C266, which acts as the Nucleophile. An NADP(+)-binding site is contributed by E363.

It belongs to the aldehyde dehydrogenase family.

It carries out the reaction succinate semialdehyde + NADP(+) + H2O = succinate + NADPH + 2 H(+). In terms of biological role, catalyzes the NADP(+)-dependent oxidation of succinate semialdehyde to succinate. It is believed to be the main source of succinate semialdehyde dehydrogenase activity in Mycobacterium. This chain is Succinate-semialdehyde dehydrogenase [NADP(+)] (gabD1), found in Mycobacterium avium (strain 104).